Consider the following 260-residue polypeptide: tRNA (guanine-N(7)-)-methyltransferase (260 aa).

The disordered stretch occupies residues 1–37 (MIHDPNDAGLPDQLPTPSSEAENSPAGDTTPPEEALH). 4 residues coordinate S-adenosyl-L-methionine: E90, E115, D142, and D165. D165 is an active-site residue. Substrate is bound by residues K169, D201, and 236–239 (TKFE).

This sequence belongs to the class I-like SAM-binding methyltransferase superfamily. TrmB family.

It carries out the reaction guanosine(46) in tRNA + S-adenosyl-L-methionine = N(7)-methylguanosine(46) in tRNA + S-adenosyl-L-homocysteine. It participates in tRNA modification; N(7)-methylguanine-tRNA biosynthesis. In terms of biological role, catalyzes the formation of N(7)-methylguanine at position 46 (m7G46) in tRNA. This is tRNA (guanine-N(7)-)-methyltransferase from Paraburkholderia xenovorans (strain LB400).